The chain runs to 1131 residues: Activity-dependent neuroprotector homeobox protein 2 (1131 aa).

Residues 73–96 (YCCGLCKYSTKVLTSFKNHLHRYH) form a C2H2-type 1 zinc finger. The C2H2-type 2; degenerate zinc finger occupies 106-128 (IPCPNCVFASQPKVVGRHFRMFH). Glycyl lysine isopeptide (Lys-Gly) (interchain with G-Cter in SUMO2) cross-links involve residues Lys118 and Lys146. A C2H2-type 3; degenerate zinc finger spans residues 155–178 (FTCLKCNFSNTLYYSMKKHVLVAH). The segment at 215-240 (YYCKKCNANASSQDALMYHILTSDIH) adopts a C2H2-type 4 zinc-finger fold. Residues 274–285 (LAAPANGSAPSA) show a composition bias toward low complexity. Positions 274–329 (LAAPANGSAPSAPAQPPCFHLALPQNSPSPAAGQPVTVAQGAPGSLTHSPPAAGQS) are disordered. The C2H2-type 5; degenerate zinc finger occupies 694–716 (KTCPVCNELFPSNVYQVHMEVAH). The segment at 747 to 768 (VRCLSCKCLVSEEELIHHLLMH) adopts a C2H2-type 6; degenerate zinc-finger fold. 2 consecutive C2H2-type zinc fingers follow at residues 770 to 793 (LGCL…RNRH) and 875 to 898 (STCP…KERH). The segment at 913–937 (FKCIHCCGVYTGNMTLAAIAVHLVR) adopts a C2H2-type 9; degenerate zinc-finger fold. Glycyl lysine isopeptide (Lys-Gly) (interchain with G-Cter in SUMO2) cross-links involve residues Lys979 and Lys1018. Ser1024 is subject to Phosphoserine. Residue Lys1032 forms a Glycyl lysine isopeptide (Lys-Gly) (interchain with G-Cter in SUMO1); alternate linkage. A Glycyl lysine isopeptide (Lys-Gly) (interchain with G-Cter in SUMO2); alternate cross-link involves residue Lys1032. Positions 1043-1102 (PKKYEGRSYEEKKQFLKDYFHKKPYPSKKEIELLSSLFWVWKIDVASFFGKRRYICMKAI) form a DNA-binding region, homeobox.

This sequence belongs to the krueppel C2H2-type zinc-finger protein family. May interact with SMARCA4/BRG1.

The protein resides in the nucleus. Functionally, may be involved in transcriptional regulation. May play a role in neuronal function; perhaps involved in protection of brain tissues from oxidative stress. May be involved in erythroid differentiation. The sequence is that of Activity-dependent neuroprotector homeobox protein 2 (ADNP2) from Homo sapiens (Human).